The chain runs to 425 residues: Palmitoyltransferase ZDHHC23 (425 aa).

The Cytoplasmic segment spans residues 1-81 (MKPVKKKKTE…RIPWLRGAKK (81 aa)). Residues 82–99 (VNISIVPPLVLLPVFLHV) form a helical membrane-spanning segment. Over 100-102 (ASW) the chain is Lumenal. A helical transmembrane segment spans residues 103 to 125 (HFLLGVVVLTSLPMLALWYYYLT). Over 126-130 (HRRKE) the chain is Cytoplasmic. The chain crosses the membrane as a helical span at residues 131–151 (QTLFFLSLGLFSLGYMYYVFL). Over 152–159 (REVVPQGR) the chain is Lumenal. Residues 160–180 (VGPTQLALLTCGLLLILLALY) traverse the membrane as a helical segment. The Cytoplasmic portion of the chain corresponds to 181–292 (RAKKNPGYLS…NSCVGESNHQ (112 aa)). The 51-residue stretch at 249–299 (DWCAKCQLVRPARAWHCRICGICVRRMDHHCVWINSCVGESNHQAFILALS) folds into the DHHC domain. Catalysis depends on cysteine 279, which acts as the S-palmitoyl cysteine intermediate. Residues 293-313 (AFILALSIFLLTSVYGISLTL) form a helical membrane-spanning segment. Topologically, residues 314–343 (NTICRDRSLFTALFYCPGVYANYSSALSFT) are lumenal. Residues 344–364 (CVWYSVIITAGMAYIFLIQLI) form a helical membrane-spanning segment. At 365 to 425 (NISYNVTERE…TVHTPAEDIV (61 aa)) the chain is on the cytoplasmic side. The tract at residues 422-425 (EDIV) is interaction with NOS1.

This sequence belongs to the DHHC palmitoyltransferase family. As to quaternary structure, interacts with NOS1. In terms of tissue distribution, expressed in the brain.

The protein resides in the golgi apparatus membrane. It localises to the golgi apparatus. The protein localises to the trans-Golgi network membrane. It catalyses the reaction L-cysteinyl-[protein] + hexadecanoyl-CoA = S-hexadecanoyl-L-cysteinyl-[protein] + CoA. In terms of biological role, palmitoyltransferase that could catalyze the addition of palmitate onto various protein substrates and be involved in a variety of cellular processes. Palmitoyltransferase that mediates palmitoylation of KCNMA1, regulating localization of KCNMA1 to the plasma membrane. May be involved in NOS1 regulation and targeting to the synaptic membrane. The protein is Palmitoyltransferase ZDHHC23 of Mus musculus (Mouse).